The chain runs to 31 residues: Cytochrome b6-f complex subunit 6 (31 aa).

A helical membrane pass occupies residues 4 to 24 (ITSYFGFLLAALTITSALFIG).

This sequence belongs to the PetL family. As to quaternary structure, the 4 large subunits of the cytochrome b6-f complex are cytochrome b6, subunit IV (17 kDa polypeptide, PetD), cytochrome f and the Rieske protein, while the 4 small subunits are PetG, PetL, PetM and PetN. The complex functions as a dimer.

The protein localises to the plastid. Its subcellular location is the chloroplast thylakoid membrane. In terms of biological role, component of the cytochrome b6-f complex, which mediates electron transfer between photosystem II (PSII) and photosystem I (PSI), cyclic electron flow around PSI, and state transitions. PetL is important for photoautotrophic growth as well as for electron transfer efficiency and stability of the cytochrome b6-f complex. The protein is Cytochrome b6-f complex subunit 6 of Hamamelis virginiana (Witch-hazel).